We begin with the raw amino-acid sequence, 182 residues long: Large ribosomal subunit protein uL6 (182 aa).

This sequence belongs to the universal ribosomal protein uL6 family. Part of the 50S ribosomal subunit.

Its function is as follows. This protein binds to the 23S rRNA, and is important in its secondary structure. It is located near the subunit interface in the base of the L7/L12 stalk, and near the tRNA binding site of the peptidyltransferase center. This is Large ribosomal subunit protein uL6 from Nostoc sp. (strain PCC 7120 / SAG 25.82 / UTEX 2576).